Reading from the N-terminus, the 290-residue chain is Glycine--tRNA ligase alpha subunit (290 aa).

The protein belongs to the class-II aminoacyl-tRNA synthetase family. Tetramer of two alpha and two beta subunits.

The protein resides in the cytoplasm. It carries out the reaction tRNA(Gly) + glycine + ATP = glycyl-tRNA(Gly) + AMP + diphosphate. The protein is Glycine--tRNA ligase alpha subunit of Syntrophobacter fumaroxidans (strain DSM 10017 / MPOB).